Consider the following 360-residue polypeptide: Aminomethyltransferase (360 aa).

This sequence belongs to the GcvT family. As to quaternary structure, the glycine cleavage system is composed of four proteins: P, T, L and H.

It carries out the reaction N(6)-[(R)-S(8)-aminomethyldihydrolipoyl]-L-lysyl-[protein] + (6S)-5,6,7,8-tetrahydrofolate = N(6)-[(R)-dihydrolipoyl]-L-lysyl-[protein] + (6R)-5,10-methylene-5,6,7,8-tetrahydrofolate + NH4(+). Its function is as follows. The glycine cleavage system catalyzes the degradation of glycine. This chain is Aminomethyltransferase, found in Bdellovibrio bacteriovorus (strain ATCC 15356 / DSM 50701 / NCIMB 9529 / HD100).